The following is a 364-amino-acid chain: Glutamate 5-kinase (364 aa).

Residue K7 coordinates ATP. Residues S47, D134, and N146 each contribute to the substrate site. ATP is bound by residues 166 to 167 (TD) and 209 to 215 (TGGIKTK). In terms of domain architecture, PUA spans 274-349 (QGTLHVDDGA…NRIKSTQYPV (76 aa)).

It belongs to the glutamate 5-kinase family.

It localises to the cytoplasm. The catalysed reaction is L-glutamate + ATP = L-glutamyl 5-phosphate + ADP. It participates in amino-acid biosynthesis; L-proline biosynthesis; L-glutamate 5-semialdehyde from L-glutamate: step 1/2. Catalyzes the transfer of a phosphate group to glutamate to form L-glutamate 5-phosphate. In Prochlorococcus marinus (strain SARG / CCMP1375 / SS120), this protein is Glutamate 5-kinase.